The sequence spans 1933 residues: WD repeat-containing protein 81 (1933 aa).

A necessary and sufficient for the interaction with SQSTM1 region spans residues 1–643; the sequence is MAQGSRRRKV…TPCESGWTRE (643 aa). Disordered regions lie at residues 305–334, 663–714, 1038–1057, 1090–1209, 1517–1544, and 1565–1590; these read PSED…RPGC, SIPG…GKIV, CAFG…SGLG, QPQE…EGKE, SLRN…SCLQ, and DSQP…SRNE. Residues 314–330 are compositionally biased toward basic and acidic residues; that stretch reads SEEKDRTGVKSEKDGEG. The BEACH domain maps to 333–610; that stretch reads GCPTCQKELR…IPRLLVQPIQ (278 aa). Over residues 668–693 the composition is skewed to low complexity; sequence AGDQPGSSSSQASPGLLPFSAPSGSR. Composition is skewed to polar residues over residues 1100-1112 and 1131-1140; these read GQLS…SEAS and VKSGDSSQDL. Residues 1145–1166 are compositionally biased toward acidic residues; the sequence is GSEEEEEEEEGCVVLEEEEQDE. WD repeat units lie at residues 1638–1677, 1684–1724, 1776–1815, 1818–1856, and 1903–1933; these read GHTG…DGTS, IYAQ…TLRT, LNPG…VLRG, AHEG…PTHH, and NFRG…RLLA.

This sequence belongs to the WD repeat WDR81 family. As to quaternary structure, interacts with WDR91; involved in early to late endosome cargo transport. Interacts with BECN1; negatively regulates the PI3 kinase/PI3K activity associated with endosomal membranes. Interacts with SQSTM1; the interaction is direct and regulates the interaction of SQSTM1 with ubiquitinated proteins. Interacts with MAP1LC3C; recruits MAP1LC3C to ubiquitinated protein aggregates in the aggrephagy process.

Its subcellular location is the early endosome membrane. The protein localises to the late endosome membrane. The protein resides in the lysosome membrane. It is found in the cytoplasmic vesicle. It localises to the autophagosome membrane. Its subcellular location is the mitochondrion. The protein localises to the cytoplasm. The protein resides in the cytosol. Its function is as follows. Functions as a negative regulator of the PI3 kinase/PI3K activity associated with endosomal membranes via BECN1, a core subunit of the PI3K complex. By modifying the phosphatidylinositol 3-phosphate/PtdInsP3 content of endosomal membranes may regulate endosome fusion, recycling, sorting and early to late endosome transport. It is for instance, required for the delivery of cargos like BST2/tetherin from early to late endosome and thereby participates indirectly to their degradation by the lysosome. May also play a role in aggrephagy, the macroautophagic degradation of ubiquitinated protein aggregates. In this process, may regulate the interaction of SQSTM1 with ubiquitinated proteins and also recruit MAP1LC3C. May also be involved in maintenance of normal mitochondrial structure and organization. This chain is WD repeat-containing protein 81, found in Rattus norvegicus (Rat).